A 392-amino-acid chain; its full sequence is S-adenosylmethionine synthase (392 aa).

Residue H15 participates in ATP binding. D17 lines the Mg(2+) pocket. E43 contributes to the K(+) binding site. 2 residues coordinate L-methionine: E56 and Q99. The flexible loop stretch occupies residues 99–109 (QSKDIAQGVDE). Residues 173-175 (DGK), 239-240 (KF), D248, 254-255 (RK), A271, and K275 contribute to the ATP site. D248 provides a ligand contact to L-methionine. K279 provides a ligand contact to L-methionine.

The protein belongs to the AdoMet synthase family. As to quaternary structure, homotetramer; dimer of dimers. Mg(2+) is required as a cofactor. K(+) serves as cofactor.

The protein resides in the cytoplasm. The enzyme catalyses L-methionine + ATP + H2O = S-adenosyl-L-methionine + phosphate + diphosphate. The protein operates within amino-acid biosynthesis; S-adenosyl-L-methionine biosynthesis; S-adenosyl-L-methionine from L-methionine: step 1/1. Functionally, catalyzes the formation of S-adenosylmethionine (AdoMet) from methionine and ATP. The overall synthetic reaction is composed of two sequential steps, AdoMet formation and the subsequent tripolyphosphate hydrolysis which occurs prior to release of AdoMet from the enzyme. This is S-adenosylmethionine synthase from Finegoldia magna (strain ATCC 29328 / DSM 20472 / WAL 2508) (Peptostreptococcus magnus).